A 669-amino-acid polypeptide reads, in one-letter code: DNA ligase (669 aa).

An NAD(+)-binding site is contributed by 35-39 (DFEYD). The interval 52-71 (YPEWDSPDSPTHRVGSDKTE) is disordered. Residues 61 to 71 (PTHRVGSDKTE) show a composition bias toward basic and acidic residues. Residues 84–85 (SL) and E115 each bind NAD(+). K117 (N6-AMP-lysine intermediate) is an active-site residue. NAD(+) contacts are provided by R138, E175, K290, and K314. Residues C408, C411, C426, and C432 each coordinate Zn(2+). The region spanning 590–669 (PVSARLAGKT…EEEFLRLIEE (80 aa)) is the BRCT domain.

It belongs to the NAD-dependent DNA ligase family. LigA subfamily. Mg(2+) serves as cofactor. The cofactor is Mn(2+).

The catalysed reaction is NAD(+) + (deoxyribonucleotide)n-3'-hydroxyl + 5'-phospho-(deoxyribonucleotide)m = (deoxyribonucleotide)n+m + AMP + beta-nicotinamide D-nucleotide.. Its function is as follows. DNA ligase that catalyzes the formation of phosphodiester linkages between 5'-phosphoryl and 3'-hydroxyl groups in double-stranded DNA using NAD as a coenzyme and as the energy source for the reaction. It is essential for DNA replication and repair of damaged DNA. This chain is DNA ligase, found in Porphyromonas gingivalis (strain ATCC 33277 / DSM 20709 / CIP 103683 / JCM 12257 / NCTC 11834 / 2561).